The chain runs to 351 residues: 1-acylglycerol-3-phosphate O-acyltransferase ABHD5 (351 aa).

Residues 79–184 (PLVLLHGFGG…LILVEPWGFP (106 aa)) form the AB hydrolase-1 domain. Serine 124 bears the Phosphoserine mark. The HXXXXD motif motif lies at 329-334 (HYVYAD).

Belongs to the peptidase S33 family. ABHD4/ABHD5 subfamily. As to quaternary structure, interacts with ADRP. Interacts with PLIN. Interacts with and PNPLA2. Interacts with PLIN5; promotes interaction with PNPLA2. Highly expressed in the adipose tissue and testes. Weakly expressed in the liver, muscle, kidney, and heart. Expressed by upper epidermal layers and dermal fibroblasts in skin, hepatocytes and hypothalamus in brain (at protein level).

It is found in the cytoplasm. The protein resides in the lipid droplet. The protein localises to the cytosol. The catalysed reaction is a 1-acyl-sn-glycero-3-phosphate + an acyl-CoA = a 1,2-diacyl-sn-glycero-3-phosphate + CoA. The enzyme catalyses 1-(9Z-octadecenoyl)-sn-glycero-3-phosphate + (9Z)-octadecenoyl-CoA = 1,2-di-(9Z-octadecenoyl)-sn-glycero-3-phosphate + CoA. It carries out the reaction 1-(9Z-octadecenoyl)-sn-glycero-3-phosphate + hexadecanoyl-CoA = 1-(9Z)-octadecenoyl-2-hexadecanoyl-sn-glycero-3-phosphate + CoA. It catalyses the reaction 1-(9Z-octadecenoyl)-sn-glycero-3-phosphate + octadecanoyl-CoA = 1-(9Z-octadecenoyl)-2-octadecanoyl-sn-glycero-3-phosphate + CoA. The catalysed reaction is 1-(9Z-octadecenoyl)-sn-glycero-3-phosphate + (5Z,8Z,11Z,14Z)-eicosatetraenoyl-CoA = 1-(9Z)-octadecenoyl-2-(5Z,8Z,11Z,14Z)-eicosatetraenoyl-sn-glycero-3-phosphate + CoA. The enzyme catalyses eicosanoyl-CoA + 1-(9Z-octadecenoyl)-sn-glycero-3-phosphate = 1-(9Z)-octadecenoyl-2-eicosanoyl-sn-glycero-3-phosphate + CoA. It carries out the reaction 1-hexadecanoyl-sn-glycero-3-phosphate + (9Z)-octadecenoyl-CoA = 1-hexadecanoyl-2-(9Z-octadecenoyl)-sn-glycero-3-phosphate + CoA. It catalyses the reaction 1-octadecanoyl-sn-glycero-3-phosphate + (9Z)-octadecenoyl-CoA = 1-octadecanoyl-2-(9Z-octadecenoyl)-sn-glycero-3-phosphate + CoA. The catalysed reaction is 1-(5Z,8Z,11Z,14Z-eicosatetraenoyl)-sn-glycero-3-phosphate + (9Z)-octadecenoyl-CoA = 1-(5Z,8Z,11Z,14Z)-eicosatetraenoyl-2-(9Z)-octadecenoyl-sn-glycero-3-phosphate + CoA. Acyltransferase activity is inhibited by detergents such as Triton X-100 and 3-[(3-cholamidopropyl)dimethylammonio]-1-propanesulfonate (CHAPS). Acyltransferase activity is inhibited by the presence of magnesium and calcium. Its function is as follows. Coenzyme A-dependent lysophosphatidic acid acyltransferase that catalyzes the transfer of an acyl group on a lysophosphatidic acid. Functions preferentially with 1-oleoyl-lysophosphatidic acid followed by 1-palmitoyl-lysophosphatidic acid, 1-stearoyl-lysophosphatidic acid and 1-arachidonoyl-lysophosphatidic acid as lipid acceptor. Functions preferentially with arachidonoyl-CoA followed by oleoyl-CoA as acyl group donors. Functions in phosphatidic acid biosynthesis. May regulate the cellular storage of triacylglycerol through activation of the phospholipase PNPLA2. Involved in keratinocyte differentiation. Regulates lipid droplet fusion. In Mus musculus (Mouse), this protein is 1-acylglycerol-3-phosphate O-acyltransferase ABHD5.